The chain runs to 141 residues: Putative pre-16S rRNA nuclease (141 aa).

It belongs to the YqgF nuclease family.

Its subcellular location is the cytoplasm. In terms of biological role, could be a nuclease involved in processing of the 5'-end of pre-16S rRNA. The sequence is that of Putative pre-16S rRNA nuclease from Sodalis glossinidius (strain morsitans).